A 379-amino-acid polypeptide reads, in one-letter code: uncharacterized protein (379 aa).

This sequence belongs to the mimivirus L17x/L18x family.

This is an uncharacterized protein from Acanthamoeba polyphaga mimivirus (APMV).